The following is a 101-amino-acid chain: Large ribosomal subunit protein uL24 (101 aa).

The protein belongs to the universal ribosomal protein uL24 family. Part of the 50S ribosomal subunit.

One of two assembly initiator proteins, it binds directly to the 5'-end of the 23S rRNA, where it nucleates assembly of the 50S subunit. In terms of biological role, one of the proteins that surrounds the polypeptide exit tunnel on the outside of the subunit. The polypeptide is Large ribosomal subunit protein uL24 (Streptococcus pneumoniae (strain ATCC 700669 / Spain 23F-1)).